Reading from the N-terminus, the 614-residue chain is DNA mismatch repair protein MutL (614 aa).

The protein belongs to the DNA mismatch repair MutL/HexB family.

In terms of biological role, this protein is involved in the repair of mismatches in DNA. It is required for dam-dependent methyl-directed DNA mismatch repair. May act as a 'molecular matchmaker', a protein that promotes the formation of a stable complex between two or more DNA-binding proteins in an ATP-dependent manner without itself being part of a final effector complex. The sequence is that of DNA mismatch repair protein MutL from Chlorobium phaeovibrioides (strain DSM 265 / 1930) (Prosthecochloris vibrioformis (strain DSM 265)).